A 144-amino-acid chain; its full sequence is ATP synthase epsilon chain (144 aa).

Belongs to the ATPase epsilon chain family. As to quaternary structure, F-type ATPases have 2 components, CF(1) - the catalytic core - and CF(0) - the membrane proton channel. CF(1) has five subunits: alpha(3), beta(3), gamma(1), delta(1), epsilon(1). CF(0) has three main subunits: a, b and c.

It is found in the cell inner membrane. Functionally, produces ATP from ADP in the presence of a proton gradient across the membrane. In Ectopseudomonas mendocina (strain ymp) (Pseudomonas mendocina), this protein is ATP synthase epsilon chain.